The primary structure comprises 175 residues: ATP synthase subunit b (175 aa).

The helical transmembrane segment at 20–40 threads the bilayer; the sequence is LIFWTAVTFVIVLVILKKIAW.

It belongs to the ATPase B chain family. F-type ATPases have 2 components, F(1) - the catalytic core - and F(0) - the membrane proton channel. F(1) has five subunits: alpha(3), beta(3), gamma(1), delta(1), epsilon(1). F(0) has four main subunits: a(1), b(2) and c(10-14). The alpha and beta chains form an alternating ring which encloses part of the gamma chain. F(1) is attached to F(0) by a central stalk formed by the gamma and epsilon chains, while a peripheral stalk is formed by the delta and b chains.

Its subcellular location is the cell inner membrane. Functionally, f(1)F(0) ATP synthase produces ATP from ADP in the presence of a proton or sodium gradient. F-type ATPases consist of two structural domains, F(1) containing the extramembraneous catalytic core and F(0) containing the membrane proton channel, linked together by a central stalk and a peripheral stalk. During catalysis, ATP synthesis in the catalytic domain of F(1) is coupled via a rotary mechanism of the central stalk subunits to proton translocation. Its function is as follows. Component of the F(0) channel, it forms part of the peripheral stalk, linking F(1) to F(0). This is ATP synthase subunit b from Chlorobaculum parvum (strain DSM 263 / NCIMB 8327) (Chlorobium vibrioforme subsp. thiosulfatophilum).